The following is a 477-amino-acid chain: Methylenetetrahydrofolate--tRNA-(uracil-5-)-methyltransferase TrmFO (477 aa).

15 to 20 contributes to the FAD binding site; sequence GAGLAG.

The protein belongs to the MnmG family. TrmFO subfamily. The cofactor is FAD.

The protein localises to the cytoplasm. The catalysed reaction is uridine(54) in tRNA + (6R)-5,10-methylene-5,6,7,8-tetrahydrofolate + NADH + H(+) = 5-methyluridine(54) in tRNA + (6S)-5,6,7,8-tetrahydrofolate + NAD(+). It carries out the reaction uridine(54) in tRNA + (6R)-5,10-methylene-5,6,7,8-tetrahydrofolate + NADPH + H(+) = 5-methyluridine(54) in tRNA + (6S)-5,6,7,8-tetrahydrofolate + NADP(+). Catalyzes the folate-dependent formation of 5-methyl-uridine at position 54 (M-5-U54) in all tRNAs. The sequence is that of Methylenetetrahydrofolate--tRNA-(uracil-5-)-methyltransferase TrmFO from Nitrobacter hamburgensis (strain DSM 10229 / NCIMB 13809 / X14).